A 704-amino-acid chain; its full sequence is Glycine--tRNA ligase beta subunit (704 aa).

The protein belongs to the class-II aminoacyl-tRNA synthetase family. In terms of assembly, tetramer of two alpha and two beta subunits.

It localises to the cytoplasm. The enzyme catalyses tRNA(Gly) + glycine + ATP = glycyl-tRNA(Gly) + AMP + diphosphate. This Delftia acidovorans (strain DSM 14801 / SPH-1) protein is Glycine--tRNA ligase beta subunit.